Reading from the N-terminus, the 394-residue chain is Succinate--CoA ligase [ADP-forming] subunit beta (394 aa).

In terms of domain architecture, ATP-grasp spans 9–243 (KDILAGFGIA…YSQLNPLEIA (235 aa)). Residues lysine 45, 52–54 (GRG), glutamate 98, valine 101, and glutamate 106 each bind ATP. Residues asparagine 198 and aspartate 212 each contribute to the Mg(2+) site. Substrate-binding positions include asparagine 263 and 320–322 (GIM).

This sequence belongs to the succinate/malate CoA ligase beta subunit family. In terms of assembly, heterotetramer of two alpha and two beta subunits. Mg(2+) serves as cofactor.

It catalyses the reaction succinate + ATP + CoA = succinyl-CoA + ADP + phosphate. It carries out the reaction GTP + succinate + CoA = succinyl-CoA + GDP + phosphate. It participates in carbohydrate metabolism; tricarboxylic acid cycle; succinate from succinyl-CoA (ligase route): step 1/1. Functionally, succinyl-CoA synthetase functions in the citric acid cycle (TCA), coupling the hydrolysis of succinyl-CoA to the synthesis of either ATP or GTP and thus represents the only step of substrate-level phosphorylation in the TCA. The beta subunit provides nucleotide specificity of the enzyme and binds the substrate succinate, while the binding sites for coenzyme A and phosphate are found in the alpha subunit. This is Succinate--CoA ligase [ADP-forming] subunit beta from Pelobacter propionicus (strain DSM 2379 / NBRC 103807 / OttBd1).